We begin with the raw amino-acid sequence, 188 residues long: UPF0301 protein XCV3063 (188 aa).

It belongs to the UPF0301 (AlgH) family.

This is UPF0301 protein XCV3063 from Xanthomonas euvesicatoria pv. vesicatoria (strain 85-10) (Xanthomonas campestris pv. vesicatoria).